The following is a 682-amino-acid chain: Methionine--tRNA ligase (682 aa).

The 'HIGH' region motif lies at 14-24 (PYANGPVHLGH). Zn(2+)-binding residues include Cys145, Cys148, Cys158, and Cys161. The 'KMSKS' region motif lies at 331 to 335 (KMSKS). An ATP-binding site is contributed by Lys334. The tRNA-binding domain maps to 580-682 (AFAAVDLRVA…SGAKPGQRIK (103 aa)).

This sequence belongs to the class-I aminoacyl-tRNA synthetase family. MetG type 1 subfamily. As to quaternary structure, homodimer. Requires Zn(2+) as cofactor.

Its subcellular location is the cytoplasm. The enzyme catalyses tRNA(Met) + L-methionine + ATP = L-methionyl-tRNA(Met) + AMP + diphosphate. In terms of biological role, is required not only for elongation of protein synthesis but also for the initiation of all mRNA translation through initiator tRNA(fMet) aminoacylation. The polypeptide is Methionine--tRNA ligase (Pseudomonas syringae pv. tomato (strain ATCC BAA-871 / DC3000)).